The sequence spans 497 residues: Glycerol kinase (497 aa).

Threonine 12 lines the ADP pocket. ATP-binding residues include threonine 12, threonine 13, and serine 14. Threonine 12 contributes to the sn-glycerol 3-phosphate binding site. Arginine 16 lines the ADP pocket. Sn-glycerol 3-phosphate-binding residues include arginine 82, glutamate 83, tyrosine 134, and aspartate 243. Arginine 82, glutamate 83, tyrosine 134, aspartate 243, and glutamine 244 together coordinate glycerol. ADP contacts are provided by threonine 265 and glycine 308. 4 residues coordinate ATP: threonine 265, glycine 308, glutamine 312, and glycine 409. ADP contacts are provided by glycine 409 and asparagine 413.

Belongs to the FGGY kinase family.

It carries out the reaction glycerol + ATP = sn-glycerol 3-phosphate + ADP + H(+). Its pathway is polyol metabolism; glycerol degradation via glycerol kinase pathway; sn-glycerol 3-phosphate from glycerol: step 1/1. Inhibited by fructose 1,6-bisphosphate (FBP). In terms of biological role, key enzyme in the regulation of glycerol uptake and metabolism. Catalyzes the phosphorylation of glycerol to yield sn-glycerol 3-phosphate. This Nitratidesulfovibrio vulgaris (strain ATCC 29579 / DSM 644 / CCUG 34227 / NCIMB 8303 / VKM B-1760 / Hildenborough) (Desulfovibrio vulgaris) protein is Glycerol kinase.